The following is a 375-amino-acid chain: Ornithine transcarbamylase, chloroplastic (375 aa).

Residues Met-1 to Gln-53 constitute a chloroplast transit peptide. Residue Ala-54 is modified to N-acetylalanine. Residues Ser-123–Thr-126, Arg-174, His-201, and Gln-204 contribute to the carbamoyl phosphate site. Residues Asn-232, Asp-293, Ser-297, and Met-298 each contribute to the L-ornithine site. The active-site Proton acceptor is Cys-333. Residues Cys-333–Leu-334 and Arg-361 contribute to the carbamoyl phosphate site.

The protein belongs to the aspartate/ornithine carbamoyltransferase superfamily. OTCase family.

It localises to the plastid. Its subcellular location is the chloroplast. It catalyses the reaction carbamoyl phosphate + L-ornithine = L-citrulline + phosphate + H(+). This is Ornithine transcarbamylase, chloroplastic (OTC) from Arabidopsis thaliana (Mouse-ear cress).